Consider the following 316-residue polypeptide: Insulin-like growth factor-binding protein 2 (316 aa).

The first 29 residues, 1–29 (MLPRLGGTALSLLPLLLLLLGTGGRGARA), serve as a signal peptide directing secretion. An IGFBP N-terminal domain is found at 31-126 (VLFRCPPCTP…VLGEGTCEKR (96 aa)). Intrachain disulfides connect Cys35–Cys76, Cys38–Cys78, Cys46–Cys79, Cys68–Cys82, Cys90–Cys103, and Cys97–Cys123. The interval 189-217 (QHRQMGKGGKHHLGLEEPKKLRPPPARTP) is disordered. A Thyroglobulin type-1 domain is found at 215–297 (RTPCQQELDQ…APTIRGDPEC (83 aa)). Intrachain disulfides connect Cys218–Cys252, Cys263–Cys274, and Cys276–Cys297. The Cell attachment site signature appears at 292–294 (RGD).

In terms of assembly, interacts with IGF1. Interacts with IGF2. Interacts (via RGD motif) with integrin alpha5/ITGA5; this interaction induces cell migration, adhesion or apoptosis according to the context. Interacts with PTPRB; this interaction leads to PTPRB dimerization and inactivation. Post-translationally, cleaved by MMP9 leading to release of free IGF2 from IGFBP2-IGF2 complex, which contributes to enhance the motility and the growth of astrocytes. O-glycosylated.

It localises to the secreted. May have both growth-inhibiting and growth-promoting effects, depending on tissue type; increases IGF-induced DNA synthesis in the uterine epithelium. IGF-binding proteins prolong the half-life of the IGFs and have been shown to either inhibit or stimulate the growth promoting effects of the IGFs on cell culture. They alter the interaction of IGFs with their cell surface receptors. Its function is as follows. Multifunctional protein that plays a critical role in regulating the availability of IGFs such as IGF1 and IGF2 to their receptors and thereby regulates IGF-mediated cellular processes including proliferation, differentiation, and apoptosis in a cell-type specific manner. Functions coordinately with receptor protein tyrosine phosphatase beta/PTPRB and the IGF1 receptor to regulate IGF1-mediated signaling by stimulating the phosphorylation of PTEN leading to its inactivation and AKT1 activation. Plays a positive role in cell migration via interaction with integrin alpha5/ITGA5 through an RGD motif. Additionally, interaction with ITGA5/ITGB1 enhances the adhesion of endothelial progenitor cells to endothelial cells. Upon mitochondrial damage, facilitates apoptosis with ITGA5 of podocytes, and then activates the phosphorylation of focal adhesion kinase (FAK)-mediated mitochondrial injury. This Sus scrofa (Pig) protein is Insulin-like growth factor-binding protein 2 (IGFBP2).